The following is a 390-amino-acid chain: 4-hydroxy-3-methylbut-2-en-1-yl diphosphate synthase (flavodoxin) (390 aa).

C281, C284, C316, and E323 together coordinate [4Fe-4S] cluster.

The protein belongs to the IspG family. The cofactor is [4Fe-4S] cluster.

The catalysed reaction is (2E)-4-hydroxy-3-methylbut-2-enyl diphosphate + oxidized [flavodoxin] + H2O + 2 H(+) = 2-C-methyl-D-erythritol 2,4-cyclic diphosphate + reduced [flavodoxin]. It functions in the pathway isoprenoid biosynthesis; isopentenyl diphosphate biosynthesis via DXP pathway; isopentenyl diphosphate from 1-deoxy-D-xylulose 5-phosphate: step 5/6. Functionally, converts 2C-methyl-D-erythritol 2,4-cyclodiphosphate (ME-2,4cPP) into 1-hydroxy-2-methyl-2-(E)-butenyl 4-diphosphate. The chain is 4-hydroxy-3-methylbut-2-en-1-yl diphosphate synthase (flavodoxin) from Salinispora tropica (strain ATCC BAA-916 / DSM 44818 / JCM 13857 / NBRC 105044 / CNB-440).